A 334-amino-acid polypeptide reads, in one-letter code: Holliday junction branch migration complex subunit RuvB (334 aa).

Residues 1–179 (MTHKISVLHQ…FAFTGRVDYY (179 aa)) form a large ATPase domain (RuvB-L) region. ATP-binding positions include leucine 18, arginine 19, glycine 60, lysine 63, threonine 64, serine 65, 126–128 (EDF), arginine 169, tyrosine 179, and arginine 216. Threonine 64 serves as a coordination point for Mg(2+). Residues 180 to 250 (TDEDLVSILS…VAEKALAMLL (71 aa)) are small ATPAse domain (RuvB-S). Residues 253–334 (NLGLNEIDIK…RNPKDRWGEE (82 aa)) are head domain (RuvB-H). 2 residues coordinate DNA: arginine 308 and arginine 313.

This sequence belongs to the RuvB family. Homohexamer. Forms an RuvA(8)-RuvB(12)-Holliday junction (HJ) complex. HJ DNA is sandwiched between 2 RuvA tetramers; dsDNA enters through RuvA and exits via RuvB. An RuvB hexamer assembles on each DNA strand where it exits the tetramer. Each RuvB hexamer is contacted by two RuvA subunits (via domain III) on 2 adjacent RuvB subunits; this complex drives branch migration. In the full resolvosome a probable DNA-RuvA(4)-RuvB(12)-RuvC(2) complex forms which resolves the HJ.

The protein localises to the cytoplasm. The catalysed reaction is ATP + H2O = ADP + phosphate + H(+). Its function is as follows. The RuvA-RuvB-RuvC complex processes Holliday junction (HJ) DNA during genetic recombination and DNA repair, while the RuvA-RuvB complex plays an important role in the rescue of blocked DNA replication forks via replication fork reversal (RFR). RuvA specifically binds to HJ cruciform DNA, conferring on it an open structure. The RuvB hexamer acts as an ATP-dependent pump, pulling dsDNA into and through the RuvAB complex. RuvB forms 2 homohexamers on either side of HJ DNA bound by 1 or 2 RuvA tetramers; 4 subunits per hexamer contact DNA at a time. Coordinated motions by a converter formed by DNA-disengaged RuvB subunits stimulates ATP hydrolysis and nucleotide exchange. Immobilization of the converter enables RuvB to convert the ATP-contained energy into a lever motion, pulling 2 nucleotides of DNA out of the RuvA tetramer per ATP hydrolyzed, thus driving DNA branch migration. The RuvB motors rotate together with the DNA substrate, which together with the progressing nucleotide cycle form the mechanistic basis for DNA recombination by continuous HJ branch migration. Branch migration allows RuvC to scan DNA until it finds its consensus sequence, where it cleaves and resolves cruciform DNA. The protein is Holliday junction branch migration complex subunit RuvB of Chlamydia trachomatis serovar A (strain ATCC VR-571B / DSM 19440 / HAR-13).